A 576-amino-acid chain; its full sequence is Proline--tRNA ligase (576 aa).

Belongs to the class-II aminoacyl-tRNA synthetase family. ProS type 1 subfamily. As to quaternary structure, homodimer.

It localises to the cytoplasm. It catalyses the reaction tRNA(Pro) + L-proline + ATP = L-prolyl-tRNA(Pro) + AMP + diphosphate. Its function is as follows. Catalyzes the attachment of proline to tRNA(Pro) in a two-step reaction: proline is first activated by ATP to form Pro-AMP and then transferred to the acceptor end of tRNA(Pro). As ProRS can inadvertently accommodate and process non-cognate amino acids such as alanine and cysteine, to avoid such errors it has two additional distinct editing activities against alanine. One activity is designated as 'pretransfer' editing and involves the tRNA(Pro)-independent hydrolysis of activated Ala-AMP. The other activity is designated 'posttransfer' editing and involves deacylation of mischarged Ala-tRNA(Pro). The misacylated Cys-tRNA(Pro) is not edited by ProRS. This is Proline--tRNA ligase from Leptospira interrogans serogroup Icterohaemorrhagiae serovar Lai (strain 56601).